Reading from the N-terminus, the 157-residue chain is Endoribonuclease YbeY (157 aa).

Positions 115, 119, and 125 each coordinate Zn(2+).

The protein belongs to the endoribonuclease YbeY family. The cofactor is Zn(2+).

The protein resides in the cytoplasm. In terms of biological role, single strand-specific metallo-endoribonuclease involved in late-stage 70S ribosome quality control and in maturation of the 3' terminus of the 16S rRNA. This Micrococcus luteus (strain ATCC 4698 / DSM 20030 / JCM 1464 / CCM 169 / CCUG 5858 / IAM 1056 / NBRC 3333 / NCIMB 9278 / NCTC 2665 / VKM Ac-2230) (Micrococcus lysodeikticus) protein is Endoribonuclease YbeY.